A 177-amino-acid chain; its full sequence is ATP-dependent protease subunit HslV (177 aa).

Residue threonine 7 is part of the active site. The Na(+) site is built by alanine 162, cysteine 165, and threonine 168.

It belongs to the peptidase T1B family. HslV subfamily. As to quaternary structure, a double ring-shaped homohexamer of HslV is capped on each side by a ring-shaped HslU homohexamer. The assembly of the HslU/HslV complex is dependent on binding of ATP.

It is found in the cytoplasm. The enzyme catalyses ATP-dependent cleavage of peptide bonds with broad specificity.. Allosterically activated by HslU binding. In terms of biological role, protease subunit of a proteasome-like degradation complex believed to be a general protein degrading machinery. In Leptospira biflexa serovar Patoc (strain Patoc 1 / Ames), this protein is ATP-dependent protease subunit HslV.